The chain runs to 514 residues: 2,3-bisphosphoglycerate-independent phosphoglycerate mutase (514 aa).

The Mn(2+) site is built by Asp14 and Ser64. Ser64 functions as the Phosphoserine intermediate in the catalytic mechanism. Residues His125, 155 to 156 (RD), Arg187, Arg193, 263 to 266 (RADR), and Lys336 each bind substrate. Positions 403, 407, 444, 445, and 463 each coordinate Mn(2+).

Belongs to the BPG-independent phosphoglycerate mutase family. Monomer. Mn(2+) serves as cofactor.

The enzyme catalyses (2R)-2-phosphoglycerate = (2R)-3-phosphoglycerate. It functions in the pathway carbohydrate degradation; glycolysis; pyruvate from D-glyceraldehyde 3-phosphate: step 3/5. Functionally, catalyzes the interconversion of 2-phosphoglycerate and 3-phosphoglycerate. This chain is 2,3-bisphosphoglycerate-independent phosphoglycerate mutase, found in Enterobacter sp. (strain 638).